The following is a 205-amino-acid chain: Large ribosomal subunit protein uL4 (205 aa).

Residues 43-78 (ARAGTKAQKTRSEVAGGGKKPWRQKGTGNARAGTIR) form a disordered region.

Belongs to the universal ribosomal protein uL4 family. As to quaternary structure, part of the 50S ribosomal subunit.

In terms of biological role, one of the primary rRNA binding proteins, this protein initially binds near the 5'-end of the 23S rRNA. It is important during the early stages of 50S assembly. It makes multiple contacts with different domains of the 23S rRNA in the assembled 50S subunit and ribosome. Forms part of the polypeptide exit tunnel. The polypeptide is Large ribosomal subunit protein uL4 (Halorhodospira halophila (strain DSM 244 / SL1) (Ectothiorhodospira halophila (strain DSM 244 / SL1))).